A 202-amino-acid polypeptide reads, in one-letter code: Large ribosomal subunit protein uL13 (202 aa).

The protein belongs to the universal ribosomal protein uL13 family.

The protein is Large ribosomal subunit protein uL13 of Caenorhabditis elegans.